Reading from the N-terminus, the 478-residue chain is Proline--tRNA ligase (478 aa).

Belongs to the class-II aminoacyl-tRNA synthetase family. ProS type 3 subfamily. As to quaternary structure, homodimer.

The protein localises to the cytoplasm. The enzyme catalyses tRNA(Pro) + L-proline + ATP = L-prolyl-tRNA(Pro) + AMP + diphosphate. Functionally, catalyzes the attachment of proline to tRNA(Pro) in a two-step reaction: proline is first activated by ATP to form Pro-AMP and then transferred to the acceptor end of tRNA(Pro). This is Proline--tRNA ligase from Clostridium botulinum (strain Okra / Type B1).